Consider the following 1380-residue polypeptide: Carboxypeptidase D (1380 aa).

The N-terminal stretch at Met1 to Ala31 is a signal peptide. Over Ala32–Glu1299 the chain is Extracellular. Residues Arg57–Val380 form the Peptidase M14 1 domain. Zn(2+)-binding residues include His139 and Glu142. The Cell attachment site motif lies at Arg162–Asp164. Asn172 carries an N-linked (GlcNAc...) asparagine glycan. The disordered stretch occupies residues Ala190 to Leu232. A compositionally biased stretch (gly residues) spans Cys195–Gly204. Residue Asn217 is glycosylated (N-linked (GlcNAc...) asparagine). His257 is a binding site for Zn(2+). Phosphotyrosine is present on Tyr265. Residue Ser270 is modified to Phosphoserine. Glu350 serves as the catalytic Proton donor/acceptor. Asn399, Asn410, Asn429, and Asn522 each carry an N-linked (GlcNAc...) asparagine glycan. One can recognise a Peptidase M14 2 domain in the interval His502–Val792. Residues His564 and Glu567 each contribute to the Zn(2+) site. Residue Asn626 is glycosylated (N-linked (GlcNAc...) asparagine). Zn(2+) is bound at residue His671. Residue Glu762 is the Proton donor/acceptor of the active site. N-linked (GlcNAc...) asparagine glycans are attached at residues Asn811, Asn855, Asn867, and Asn879. The tract at residues Ser874–Thr899 is disordered. Residues Ala887–Pro897 are compositionally biased toward polar residues. The region spanning Arg932–Val1211 is the Peptidase M14 3 domain. Residues Asn955, Asn978, Asn1070, and Asn1142 are each glycosylated (N-linked (GlcNAc...) asparagine). Residues Leu1300–Trp1320 traverse the membrane as a helical segment. S-palmitoyl cysteine attachment occurs at residues Cys1317, Cys1321, and Cys1323. Topologically, residues Cys1321–His1380 are cytoplasmic. A phosphoserine mark is found at Ser1358 and Ser1361. The disordered stretch occupies residues Leu1359–His1380. Residues Thr1368 and Thr1370 each carry the phosphothreonine modification.

Belongs to the peptidase M14 family. Zn(2+) serves as cofactor. In terms of tissue distribution, highly expressed in placenta, pancreas and hepatoma cells. Lower levels found in skeletal muscle, heart and colon carcinoma and melanoma cell lines.

It is found in the cell membrane. It catalyses the reaction Releases C-terminal Arg and Lys from polypeptides.. The sequence is that of Carboxypeptidase D (CPD) from Homo sapiens (Human).